We begin with the raw amino-acid sequence, 155 residues long: Ribonuclease H (155 aa).

Positions 1 to 142 constitute an RNase H type-1 domain; the sequence is MLKQVEIFTD…CDELARAAAM (142 aa). Residues D10, E48, D70, and D134 each coordinate Mg(2+).

The protein belongs to the RNase H family. Monomer. Mg(2+) serves as cofactor.

It is found in the cytoplasm. The catalysed reaction is Endonucleolytic cleavage to 5'-phosphomonoester.. Its function is as follows. Endonuclease that specifically degrades the RNA of RNA-DNA hybrids. This Escherichia coli (strain 55989 / EAEC) protein is Ribonuclease H.